We begin with the raw amino-acid sequence, 264 residues long: Exosome complex component Rrp4 (264 aa).

Residues 65-137 (GDNVLGKIVD…EVNNIELTTK (73 aa)) form the S1 motif domain. Residues 147-206 (RGGQIIKITSSKVPRVIGKGGSMINMIKKLTQSRIIVGQNGWIWISSKNPELEKLAIEAI) form the KH domain. A compositionally biased stretch (acidic residues) spans 244 to 258 (SLEEETQEETVMEND). The disordered stretch occupies residues 244 to 264 (SLEEETQEETVMENDVEARGP).

The protein belongs to the RRP4 family. As to quaternary structure, component of the archaeal exosome complex. Forms a trimer of Rrp4 and/or Csl4 subunits. The trimer associates with a hexameric ring-like arrangement composed of 3 Rrp41-Rrp42 heterodimers.

It localises to the cytoplasm. Its function is as follows. Non-catalytic component of the exosome, which is a complex involved in RNA degradation. Increases the RNA binding and the efficiency of RNA degradation. Confers strong poly(A) specificity to the exosome. This is Exosome complex component Rrp4 from Pyrococcus furiosus (strain ATCC 43587 / DSM 3638 / JCM 8422 / Vc1).